Consider the following 183-residue polypeptide: Shikimate kinase (183 aa).

14–19 (GAGKTT) serves as a coordination point for ATP. Position 18 (T18) interacts with Mg(2+). 3 residues coordinate substrate: D36, R60, and G82. ATP is bound at residue R120. Substrate is bound at residue R139. Residue Q156 coordinates ATP.

This sequence belongs to the shikimate kinase family. In terms of assembly, monomer. Mg(2+) serves as cofactor.

It localises to the cytoplasm. It carries out the reaction shikimate + ATP = 3-phosphoshikimate + ADP + H(+). It functions in the pathway metabolic intermediate biosynthesis; chorismate biosynthesis; chorismate from D-erythrose 4-phosphate and phosphoenolpyruvate: step 5/7. Its function is as follows. Catalyzes the specific phosphorylation of the 3-hydroxyl group of shikimic acid using ATP as a cosubstrate. In Thiobacillus denitrificans (strain ATCC 25259 / T1), this protein is Shikimate kinase.